A 184-amino-acid polypeptide reads, in one-letter code: Large ribosomal subunit protein uL18 (184 aa).

The protein belongs to the universal ribosomal protein uL18 family. As to quaternary structure, part of the 50S ribosomal subunit. Contacts the 5S and 23S rRNAs.

Functionally, this is one of the proteins that bind and probably mediate the attachment of the 5S RNA into the large ribosomal subunit, where it forms part of the central protuberance. This Haloferax volcanii (strain ATCC 29605 / DSM 3757 / JCM 8879 / NBRC 14742 / NCIMB 2012 / VKM B-1768 / DS2) (Halobacterium volcanii) protein is Large ribosomal subunit protein uL18 (rpl18).